Here is a 141-residue protein sequence, read N- to C-terminus: S-adenosylmethionine decarboxylase proenzyme (141 aa).

Ser-63 serves as the catalytic Schiff-base intermediate with substrate; via pyruvic acid. Ser-63 bears the Pyruvic acid (Ser); by autocatalysis mark. His-68 serves as the catalytic Proton acceptor; for processing activity. Residue Cys-83 is the Proton donor; for catalytic activity of the active site.

Belongs to the prokaryotic AdoMetDC family. Type 1 subfamily. Heterotetramer of two alpha and two beta chains arranged as a dimer of alpha/beta heterodimers. Pyruvate serves as cofactor. Is synthesized initially as an inactive proenzyme. Formation of the active enzyme involves a self-maturation process in which the active site pyruvoyl group is generated from an internal serine residue via an autocatalytic post-translational modification. Two non-identical subunits are generated from the proenzyme in this reaction, and the pyruvate is formed at the N-terminus of the alpha chain, which is derived from the carboxyl end of the proenzyme. The post-translation cleavage follows an unusual pathway, termed non-hydrolytic serinolysis, in which the side chain hydroxyl group of the serine supplies its oxygen atom to form the C-terminus of the beta chain, while the remainder of the serine residue undergoes an oxidative deamination to produce ammonia and the pyruvoyl group blocking the N-terminus of the alpha chain.

It catalyses the reaction S-adenosyl-L-methionine + H(+) = S-adenosyl 3-(methylsulfanyl)propylamine + CO2. It participates in amine and polyamine biosynthesis; S-adenosylmethioninamine biosynthesis; S-adenosylmethioninamine from S-adenosyl-L-methionine: step 1/1. Its function is as follows. Catalyzes the decarboxylation of S-adenosylmethionine to S-adenosylmethioninamine (dcAdoMet), the propylamine donor required for the synthesis of the polyamines spermine and spermidine from the diamine putrescine. This is S-adenosylmethionine decarboxylase proenzyme from Thermococcus onnurineus (strain NA1).